The following is a 435-amino-acid chain: Acetyltransferase atnC (435 aa).

The next 3 helical transmembrane spans lie at 10-30, 40-60, and 68-88; these read AFAN…FLII, YFGI…APTL, and SFLA…LLIL. N203 is a glycosylation site (N-linked (GlcNAc...) asparagine). Helical transmembrane passes span 306 to 326, 333 to 353, and 370 to 390; these read FLVF…MGLS, IPYF…QAFY, and VVGF…YMFP. N406 carries an N-linked (GlcNAc...) asparagine glycan. Residues 407–427 traverse the membrane as a helical segment; sequence LTEVIGMPMMWGLLGTFGMLV.

The protein belongs to the wax synthase family.

Its subcellular location is the membrane. It functions in the pathway secondary metabolite biosynthesis; terpenoid biosynthesis. Its function is as follows. Acetyltransferase; part of the gene cluster that mediates the biosynthesis of the meroterpenoids arthripenoids. The pathway begins with the HR-PKS atnH that catalyzes two chain-extension steps to form a reduced triketide, which then primes the SAT domain in the NR-PKS atnG to initiate three more cycles of extension to give a linear hexaketide corresponding to the polyketide part of arthripenoids. The FAD-dependent monooxygenase atnJ then performs an oxidative decarboxylation at C11 of the atnH/atnG product, via an electrophilic aromatic hydroxylation with concomitant ipso-decarboxylation. The membrane-bound polyprenyl transferase atnF then introduces a farnesyl group before the FAD-dependent monooxygenase atnK functions as the first epoxidase on terminal C12'-C13' olefin, followed by a second epoxidation on C7'-C8' catalyzed by atnA. The terpene cyclase/mutase atnI then initiates the sequential tricyclic ring formation through protonation of the terminal epoxide and catalyzes the regioselective and stereoselective 6/6/6-tricyclic ring formation. The cytochrome P450 monooxygenase atnM is responsible for hydroxylating both C1' and C10'. The next steps may involve ketoreduction and acetyl transfer by the ketoreductase atnB and the acetyltransferase atnC, and lead to the production of arthripenoid B, the final biosynthetic product of the atn cluster. The hydroquinone moiety in arthripenoid B is prone to undergo spontaneous oxidation to afford a benzoquinone compound, a key intermediate for generating structure diversity. For instance, addition of a cysteine followed by ring contraction gives arthripenoid A, tautomerization gives the main product arthripenoid C, addition of a molecular of water or amine affords arthripenoid D or E, respectively, and loss of one water forms arthripenoid F. The protein is Acetyltransferase atnC of Arthrinium sp.